We begin with the raw amino-acid sequence, 481 residues long: MNEVSVIKEGWLHKRGEYIKTWRPRYFLLKSDGSFIGYKERPEAPDQTLPPLNNFSVAECQLMKTERPRPNTFVIRCLQWTTVIERTFHVDSPDEREEWIRAIQMVANSLKQRGPGEDAMDYKCGSPSDSSTSEMMEVAVSKARAKVTMNDFDYLKLLGKGTFGKVILVREKATGRYYAMKILRKEVIIAKDEVAHTVTESRVLQNTRHPFLTALKYAFQTHDRLCFVMEYANGGDLFFHLSRERVFTEDRARFYGAEIVSALEYLHSTDVVYRDIKLENLMLDKDGHIKITDFGLSKEGISDGATMKTFCGTPEYLAPEVLEDNDYGRAVDWWGLGVVMYEMMCGRLPFYNQDHERLFELILMEEIRFPRTLGPEAKSLLAGLLKKDPKQRLGGGPSDAKEVMEHRFFLSINWQDVVQKKLLPPFKPQVTSEVDTRYFDDEFTAQSITITPPDRYDSLGSLELDQRTHFPQFSYSASIRE.

Position 1 is an N-acetylmethionine (methionine 1). Positions 5–108 (SVIKEGWLHK…WIRAIQMVAN (104 aa)) constitute a PH domain. Serine 34 is subject to Phosphoserine. Cysteine 60 and cysteine 77 are disulfide-bonded. Serine 126 carries the phosphoserine modification. O-linked (GlcNAc) serine glycans are attached at residues serine 128 and serine 131. The 258-residue stretch at 152–409 (FDYLKLLGKG…AKEVMEHRFF (258 aa)) folds into the Protein kinase domain. Residues 158 to 166 (LGKGTFGKV) and lysine 181 each bind ATP. Aspartate 275 acts as the Proton acceptor in catalysis. The Mn(2+) site is built by asparagine 280 and aspartate 293. Threonine 306 carries an O-linked (GlcNAc) threonine glycan. Threonine 309 bears the Phosphothreonine; by PDPK1 mark. O-linked (GlcNAc) threonine glycosylation occurs at threonine 313. In terms of domain architecture, AGC-kinase C-terminal spans 410–481 (LSINWQDVVQ…QFSYSASIRE (72 aa)). Serine 447 bears the Phosphoserine mark. Phosphothreonine is present on threonine 451. 3 positions are modified to phosphoserine: serine 461, serine 474, and serine 478. The O-linked (GlcNAc) serine; alternate glycan is linked to serine 474.

It belongs to the protein kinase superfamily. AGC Ser/Thr protein kinase family. RAC subfamily. Interacts with BTBD10. Interacts with KCTD20. Interacts (via PH domain) with MTCP1, TCL1A and TCL1B; this interaction may facilitate AKT2 oligomerization and phosphorylation, hence increasing kinase activity. Interacts with PHB2; this interaction may be important for myogenic differentiation. Interacts (when phosphorylated) with CLIP3; this interaction promotes cell membrane localization. Interacts with WDFY2 (via WD repeats 1-3). In terms of processing, phosphorylation on Thr-309 and Ser-474 is required for full activity. Phosphorylation of the activation loop at Thr-309 by PDPK1/PDK1 is a prerequisite for full activation. Phosphorylated and activated by PDPK1/PDK1 in the presence of phosphatidylinositol 3,4,5-trisphosphate. Phosphorylation by mTORC2 in response to growth factors plays a key role in AKT1 activation: mTORC2 phosphorylates different sites depending on the context, such as Ser-474 or Ser-478, thereby facilitating subsequent phosphorylation of the activation loop by PDPK1/PDK1. Ubiquitinated; undergoes both 'Lys-48'- and 'Lys-63'-linked polyubiquitination. TRAF6-induced 'Lys-63'-linked AKT2 ubiquitination. When fully phosphorylated and translocated into the nucleus, undergoes 'Lys-48'-polyubiquitination catalyzed by TTC3, leading to its degradation by the proteasome. Post-translationally, O-GlcNAcylation at Thr-306 and Thr-313 inhibits activating phosphorylation at Thr-309 via disrupting the interaction between AKT and PDPK1/PDK1. As to expression, expressed in adipocytes and hepatocytes (at protein level). Expressed at low levels in skeletal muscle (at protein level).

The protein resides in the cytoplasm. It is found in the nucleus. Its subcellular location is the cell membrane. It localises to the early endosome. It carries out the reaction L-seryl-[protein] + ATP = O-phospho-L-seryl-[protein] + ADP + H(+). The enzyme catalyses L-threonyl-[protein] + ATP = O-phospho-L-threonyl-[protein] + ADP + H(+). Phosphorylation at Thr-309 (in the kinase domain) and Ser-474 (in the C-terminal regulatory region) is required for full activation. In adipocytes and hepatocytes, the activation is induced by insulin. AKT2 phosphorylation of PKP1 is induced by insulin. Serine/threonine kinase closely related to AKT1 and AKT3. All 3 enzymes, AKT1, AKT2 and AKT3, are collectively known as AKT kinase. AKT regulates many processes including metabolism, proliferation, cell survival, growth and angiogenesis, through the phosphorylation of a range of downstream substrates. Over 100 substrates have been reported so far, although for most of them, the precise AKT kinase catalyzing the reaction was not specified. AKT regulates glucose uptake by mediating insulin-induced translocation of the SLC2A4/GLUT4 glucose transporter to the cell surface. Phosphorylation of PTPN1 at 'Ser-50' negatively modulates its phosphatase activity preventing dephosphorylation of the insulin receptor and the attenuation of insulin signaling. Phosphorylation of TBC1D4 triggers the binding of this effector to inhibitory 14-3-3 proteins, which is required for insulin-stimulated glucose transport. AKT also regulates the storage of glucose in the form of glycogen by phosphorylating GSK3A at 'Ser-21' and GSK3B at 'Ser-9', resulting in inhibition of its kinase activity. Phosphorylation of GSK3 isoforms by AKT is also thought to be one mechanism by which cell proliferation is driven. AKT also regulates cell survival via the phosphorylation of MAP3K5 (apoptosis signal-related kinase). Phosphorylation of 'Ser-83' decreases MAP3K5 kinase activity stimulated by oxidative stress and thereby prevents apoptosis. AKT mediates insulin-stimulated protein synthesis by phosphorylating TSC2 at 'Ser-939' and 'Thr-1462', thereby activating mTORC1 signaling and leading to both phosphorylation of 4E-BP1 and in activation of RPS6KB1. AKT is involved in the phosphorylation of members of the FOXO factors (Forkhead family of transcription factors), leading to binding of 14-3-3 proteins and cytoplasmic localization. In particular, FOXO1 is phosphorylated at 'Thr-24', 'Ser-256' and 'Ser-319'. FOXO3 and FOXO4 are phosphorylated on equivalent sites. AKT has an important role in the regulation of NF-kappa-B-dependent gene transcription and positively regulates the activity of CREB1 (cyclic AMP (cAMP)-response element binding protein). The phosphorylation of CREB1 induces the binding of accessory proteins that are necessary for the transcription of pro-survival genes such as BCL2 and MCL1. AKT phosphorylates 'Ser-454' on ATP citrate lyase (ACLY), thereby potentially regulating ACLY activity and fatty acid synthesis. Activates the 3B isoform of cyclic nucleotide phosphodiesterase (PDE3B) via phosphorylation of 'Ser-273', resulting in reduced cyclic AMP levels and inhibition of lipolysis. Phosphorylates PIKFYVE on 'Ser-318', which results in increased PI(3)P-5 activity. The Rho GTPase-activating protein DLC1 is another substrate and its phosphorylation is implicated in the regulation cell proliferation and cell growth. AKT plays a role as key modulator of the AKT-mTOR signaling pathway controlling the tempo of the process of newborn neurons integration during adult neurogenesis, including correct neuron positioning, dendritic development and synapse formation. Signals downstream of phosphatidylinositol 3-kinase (PI(3)K) to mediate the effects of various growth factors such as platelet-derived growth factor (PDGF), epidermal growth factor (EGF), insulin and insulin-like growth factor 1 (IGF1). AKT mediates the antiapoptotic effects of IGF1. Essential for the SPATA13-mediated regulation of cell migration and adhesion assembly and disassembly. May be involved in the regulation of the placental development. In response to lysophosphatidic acid stimulation, inhibits the ciliogenesis cascade. In this context, phosphorylates WDR44, hence stabilizing its interaction with Rab11 and preventing the formation of the ciliogenic Rab11-FIP3-RAB3IP complex. Also phosphorylates RAB3IP/Rabin8, thus may affect RAB3IP guanine nucleotide exchange factor (GEF) activity toward Rab8, which is important for cilia growth. Phosphorylates PKP1, facilitating its interaction with YWHAG and translocation to the nucleus, ultimately resulting in a reduction in keratinocyte intercellular adhesion. Phosphorylation of PKP1 increases PKP1 protein stability, translocation to the cytoplasm away from desmosome plaques and PKP1-driven cap-dependent translation. In terms of biological role, several AKT2-specific substrates have been identified, including ANKRD2, C2CD5, CLK2 and PITX2. May play a role in myoblast differentiation. In this context, may act through PITX2 phosphorylation. Unphosphorylated PITX2 associates with an ELAVL1/HuR-containing complex, which stabilizes cyclin mRNA and ensuring cell proliferation. Phosphorylation by AKT2 impairs this association, leading to CCND1 mRNA destabilization and progression towards differentiation. Also involved in the negative regulation of myogenesis in response to stress conditions. In this context, acts by phosphorylating ANKRD2. May also be a key regulator of glucose uptake. Regulates insulin-stimulated glucose transport by the increase of glucose transporter GLUT4 translocation from intracellular stores to the plasma membrane. In this context, acts by phosphorylating C2CD5/CDP138 on 'Ser-197' in insulin-stimulated adipocytes. Through the phosphorylation of CLK2 on 'Thr-343', involved in insulin-regulated suppression of hepatic gluconeogenesis. This Rattus norvegicus (Rat) protein is RAC-beta serine/threonine-protein kinase.